Here is a 101-residue protein sequence, read N- to C-terminus: Phosphoribosyl-ATP pyrophosphatase (101 aa).

It belongs to the PRA-PH family.

The protein resides in the cytoplasm. The enzyme catalyses 1-(5-phospho-beta-D-ribosyl)-ATP + H2O = 1-(5-phospho-beta-D-ribosyl)-5'-AMP + diphosphate + H(+). The protein operates within amino-acid biosynthesis; L-histidine biosynthesis; L-histidine from 5-phospho-alpha-D-ribose 1-diphosphate: step 2/9. This is Phosphoribosyl-ATP pyrophosphatase from Natronomonas pharaonis (strain ATCC 35678 / DSM 2160 / CIP 103997 / JCM 8858 / NBRC 14720 / NCIMB 2260 / Gabara) (Halobacterium pharaonis).